The following is a 456-amino-acid chain: Glutamate-gated chloride channel (456 aa).

The signal sequence occupies residues 1–22 (MGSGHYFWAILYFASLCSASLA). Residues 23–245 (NNAKINFREK…VDLLFKREFS (223 aa)) are Extracellular-facing. 3 residues coordinate L-glutamate: Arg-71, Arg-90, and Ser-154. Cys-163 and Cys-177 are disulfide-bonded. Ser-183 is an L-glutamate binding site. A disulfide bridge connects residues Cys-222 and Cys-233. The chain crosses the membrane as a helical span at residues 246–268 (YYLIQIYIPCCMLVIVSWVSFWL). Topologically, residues 269–273 (DQGAV) are cytoplasmic. A helical membrane pass occupies residues 274 to 295 (PARVSLGVTTLLTMATQTSGIN). Over 296 to 302 (ASLPPVS) the chain is Extracellular. The chain crosses the membrane as a helical span at residues 303 to 323 (YTKAIDVWTGVCLTFVFGALL). Over 324-426 (EFALVNYASR…RQCSRSKRID (103 aa)) the chain is Cytoplasmic. The helical transmembrane segment at 427 to 450 (VISRITFPLVFALFNLVYWSTYLF) threads the bilayer. The Extracellular portion of the chain corresponds to 451 to 456 (REEEDE).

The protein belongs to the ligand-gated ion channel (TC 1.A.9) family. Glutamate-gated chloride channel (TC 1.A.9.4) subfamily. Pentamer. Homomultimer. In terms of tissue distribution, expressed in the medulla layers (at protein level). Expressed in all major ON pathway medulla neurons (Mi1, Tm3, Mi4, and Mi9) and in OFF pathway neurons (Tm1, Tm2, Tm4, and Tm9).

It is found in the postsynaptic cell membrane. The protein resides in the cell membrane. With respect to regulation, glutamate binding triggers a rapidly reversible current, while the anti-helmintic drug ivermectin triggers a permanently open channel configuration. Inhibited by picrotoxin. Its function is as follows. Glutamate-gated chloride channel subunit. Together with Gamma-aminobutyric acid receptor Rdl, plays an important role in the visual response by regulating the activity of ON/OFF-selective neurons. The protein is Glutamate-gated chloride channel (GluClalpha) of Drosophila melanogaster (Fruit fly).